A 258-amino-acid polypeptide reads, in one-letter code: UPF0246 protein CGSHiGG_08495 (258 aa).

The protein belongs to the UPF0246 family.

The protein is UPF0246 protein CGSHiGG_08495 of Haemophilus influenzae (strain PittGG).